Reading from the N-terminus, the 250-residue chain is 1-(5-phosphoribosyl)-5-[(5-phosphoribosylamino)methylideneamino] imidazole-4-carboxamide isomerase (250 aa).

Residue Asp8 is the Proton acceptor of the active site. Residue Asp129 is the Proton donor of the active site.

Belongs to the HisA/HisF family.

It localises to the cytoplasm. It carries out the reaction 1-(5-phospho-beta-D-ribosyl)-5-[(5-phospho-beta-D-ribosylamino)methylideneamino]imidazole-4-carboxamide = 5-[(5-phospho-1-deoxy-D-ribulos-1-ylimino)methylamino]-1-(5-phospho-beta-D-ribosyl)imidazole-4-carboxamide. It participates in amino-acid biosynthesis; L-histidine biosynthesis; L-histidine from 5-phospho-alpha-D-ribose 1-diphosphate: step 4/9. The chain is 1-(5-phosphoribosyl)-5-[(5-phosphoribosylamino)methylideneamino] imidazole-4-carboxamide isomerase from Desulfatibacillum aliphaticivorans.